Consider the following 70-residue polypeptide: Large ribosomal subunit protein bL31 (70 aa).

Zn(2+) is bound by residues cysteine 16, cysteine 18, cysteine 37, and cysteine 40.

Belongs to the bacterial ribosomal protein bL31 family. Type A subfamily. In terms of assembly, part of the 50S ribosomal subunit. Zn(2+) is required as a cofactor.

Binds the 23S rRNA. In Salmonella agona (strain SL483), this protein is Large ribosomal subunit protein bL31.